We begin with the raw amino-acid sequence, 322 residues long: ATP-dependent 6-phosphofructokinase (322 aa).

Gly-11 is an ATP binding site. An ADP-binding site is contributed by 21 to 25 (RAVVR). ATP contacts are provided by residues 72–73 (RC) and 102–105 (GDGS). Residue Asp-103 participates in Mg(2+) binding. Residue 127 to 129 (TID) participates in substrate binding. The active-site Proton acceptor is Asp-129. Arg-156 serves as a coordination point for ADP. Substrate contacts are provided by residues Arg-164 and 171 to 173 (MGR). ADP contacts are provided by residues 187 to 189 (GAE), Arg-213, and 215 to 217 (KKH). Residues Glu-224, Arg-245, and 251-254 (HVQR) each bind substrate.

Belongs to the phosphofructokinase type A (PFKA) family. ATP-dependent PFK group I subfamily. Prokaryotic clade 'B1' sub-subfamily. As to quaternary structure, homotetramer. Requires Mg(2+) as cofactor.

The protein resides in the cytoplasm. The catalysed reaction is beta-D-fructose 6-phosphate + ATP = beta-D-fructose 1,6-bisphosphate + ADP + H(+). The protein operates within carbohydrate degradation; glycolysis; D-glyceraldehyde 3-phosphate and glycerone phosphate from D-glucose: step 3/4. With respect to regulation, allosterically activated by ADP and other diphosphonucleosides, and allosterically inhibited by phosphoenolpyruvate. Functionally, catalyzes the phosphorylation of D-fructose 6-phosphate to fructose 1,6-bisphosphate by ATP, the first committing step of glycolysis. This Staphylococcus aureus (strain MRSA252) protein is ATP-dependent 6-phosphofructokinase.